We begin with the raw amino-acid sequence, 172 residues long: Ribosome maturation factor RimM (172 aa).

One can recognise a PRC barrel domain in the interval 97–170 (ENEFYFHEII…KITIEVMEGL (74 aa)).

The protein belongs to the RimM family. Binds ribosomal protein uS19.

The protein resides in the cytoplasm. Functionally, an accessory protein needed during the final step in the assembly of 30S ribosomal subunit, possibly for assembly of the head region. Essential for efficient processing of 16S rRNA. May be needed both before and after RbfA during the maturation of 16S rRNA. It has affinity for free ribosomal 30S subunits but not for 70S ribosomes. This is Ribosome maturation factor RimM from Listeria innocua serovar 6a (strain ATCC BAA-680 / CLIP 11262).